The following is a 103-amino-acid chain: MASMTMTATFFPAVAKVPSATGGRRLSVVRASTSDNTPSLEVKEQSSTTMRRDLMFTAAAAAVCSLAKVAMAEEEEPKRGTEAAKKKYAQVCVTMPTAKICRY.

The N-terminal 75 residues, 1–75, are a transit peptide targeting the chloroplast; the sequence is MASMTMTATF…LAKVAMAEEE (75 aa).

The maturation of the PSII-T precursor to its final form occurs through a two step process. First, a stromal intermediate is formed, which, upon translocation into the thylakoid membrane, is processed to the mature protein.

It localises to the plastid. The protein resides in the chloroplast thylakoid membrane. In terms of biological role, may be a component of the oxygen-evolving complex. This chain is Photosystem II 5 kDa protein, chloroplastic (PSBT), found in Arabidopsis thaliana (Mouse-ear cress).